A 180-amino-acid polypeptide reads, in one-letter code: Peptide deformylase (180 aa).

Fe cation contacts are provided by Cys88 and His130. The active site involves Glu131. His134 serves as a coordination point for Fe cation.

Belongs to the polypeptide deformylase family. It depends on Fe(2+) as a cofactor.

The enzyme catalyses N-terminal N-formyl-L-methionyl-[peptide] + H2O = N-terminal L-methionyl-[peptide] + formate. Functionally, removes the formyl group from the N-terminal Met of newly synthesized proteins. Requires at least a dipeptide for an efficient rate of reaction. N-terminal L-methionine is a prerequisite for activity but the enzyme has broad specificity at other positions. The chain is Peptide deformylase from Acidothermus cellulolyticus (strain ATCC 43068 / DSM 8971 / 11B).